Reading from the N-terminus, the 1604-residue chain is E3 ubiquitin-protein ligase HECW1 (1604 aa).

A C2 domain is found at 182–318 (SAAPIFKGIG…LERHAIGDRV (137 aa)). Disordered stretches follow at residues 350–539 (DEEI…CSLP), 572–604 (PSAQRGSTTEEEDGLEEESTLKESSEKDGLSEV), 642–667 (GIGAGQDGEAHPSTGSESDSSPQQGA), and 727–826 (STVF…TIDE). Residues 362–380 (SAETQDSIMNSMVGNSNGE) show a composition bias toward polar residues. Residues 387–396 (EFCKDAKPES) show a composition bias toward basic and acidic residues. Positions 398–412 (SEGNGVNSSENQNQE) are enriched in polar residues. Composition is skewed to acidic residues over residues 435–444 (APEEPGELQD) and 458–469 (EVAEGLPLDEDS). The segment covering 494 to 505 (GAREEEMQKGKD) has biased composition (basic and acidic residues). Positions 580–589 (TEEEDGLEEE) are enriched in acidic residues. Positions 590-601 (STLKESSEKDGL) are enriched in basic and acidic residues. Polar residues-rich tracts occupy residues 654–667 (STGSESDSSPQQGA), 748–762 (DSVQSPELDPESTNG), and 803–812 (HNSQPISQLP). The WW 1 domain occupies 826–859 (EPLPPNWEARIDSHGRVFYVDHINRTTTWQRPSM). Phosphoserine is present on serine 871. A coiled-coil region spans residues 871-898 (SVHQMEQLNRRYQNIQRTMATERAEEDS). The segment at 890–936 (ATERAEEDSGNQNSEQIPDGGGGGGGGSDSEAESSQSSLDLRREGSL) is disordered. The segment covering 908-917 (DGGGGGGGGS) has biased composition (gly residues). Serine 935 and serine 937 each carry phosphoserine. One can recognise a WW 2 domain in the interval 1016–1049 (LELPRGWEIKTDHQGKSFFVDHNSRATTFIDPRI). The HECT domain maps to 1269–1604 (SRKELQRNKL…VEETSTFGLE (336 aa)). The active-site Glycyl thioester intermediate is the cysteine 1572.

Interacts with DVL1 and SSR3. In terms of tissue distribution, predominantly expressed in neurons of the spinal cord.

The protein localises to the cytoplasm. It carries out the reaction S-ubiquitinyl-[E2 ubiquitin-conjugating enzyme]-L-cysteine + [acceptor protein]-L-lysine = [E2 ubiquitin-conjugating enzyme]-L-cysteine + N(6)-ubiquitinyl-[acceptor protein]-L-lysine.. Its pathway is protein modification; protein ubiquitination. E3 ubiquitin-protein ligase that mediates ubiquitination and subsequent degradation of DVL1. This Mus musculus (Mouse) protein is E3 ubiquitin-protein ligase HECW1 (Hecw1).